Here is a 401-residue protein sequence, read N- to C-terminus: cAMP-dependent protein kinase type II-alpha regulatory subunit (401 aa).

Serine 2 carries the N-acetylserine modification. The segment at 2–135 (SHIQIPPGLT…RLQEACKDIL (134 aa)) is dimerization and phosphorylation. 4 positions are modified to phosphoserine: serine 47, serine 74, serine 76, and serine 96. Positions 61 to 83 (ESSAVPVIEEDGESDSDSEDADL) are disordered. The segment covering 68-83 (IEEDGESDSDSEDADL) has biased composition (acidic residues). 3',5'-cyclic AMP-binding positions include 136 to 257 (LFKN…ESVP), glutamate 205, arginine 214, 258 to 401 (LFKS…DPGQ), glutamate 335, and arginine 344. Threonine 212 is subject to Phosphothreonine; by PDPK1. Phosphoserine is present on residues serine 347 and serine 392.

Belongs to the cAMP-dependent kinase regulatory chain family. As to quaternary structure, the inactive form of the enzyme is composed of two regulatory chains and two catalytic chains. Activation by cAMP produces two active catalytic monomers and a regulatory dimer that binds four cAMP molecules. Interacts with AKAP4. Interacts with CBFA2T3. Interacts with the phosphorylated form of PJA2. Interacts with MYRIP. This interaction may link PKA to components of the exocytosis machinery, thus facilitating exocytosis, including insulin release. Forms a complex composed of PRKAR2A, GSK3B and GSKIP through GSKIP interaction; facilitates PKA-induced phosphorylation and regulates GSK3B activity. Interacts with ADCY8; inhibits adenylate cyclase activity through PKA phosphorylation. Phosphorylated by the activated catalytic chain. As to expression, four types of regulatory chains are found: I-alpha, I-beta, II-alpha, and II-beta. Their expression varies among tissues and is in some cases constitutive and in others inducible.

The protein resides in the cytoplasm. The protein localises to the cell membrane. Functionally, regulatory subunit of the cAMP-dependent protein kinases involved in cAMP signaling in cells. Type II regulatory chains mediate membrane association by binding to anchoring proteins, including the MAP2 kinase. The chain is cAMP-dependent protein kinase type II-alpha regulatory subunit (Prkar2a) from Mus musculus (Mouse).